Consider the following 349-residue polypeptide: Probable sugar phosphate/phosphate translocator At5g25400 (349 aa).

10 helical membrane passes run Ile-15 to Tyr-35, Phe-49 to Ile-69, Val-89 to Tyr-109, Ser-113 to Phe-133, Glu-141 to Ala-161, Val-165 to Ile-185, Val-205 to Leu-225, Leu-236 to Val-256, Thr-263 to Ile-283, and Thr-286 to Asn-306. The EamA domain occupies Tyr-38–Ala-156. The tract at residues Thr-321–Asp-349 is disordered. Positions Glu-328–Asp-349 are enriched in basic and acidic residues.

The protein belongs to the TPT transporter family. TPT (TC 2.A.7.9) subfamily.

The protein localises to the membrane. This chain is Probable sugar phosphate/phosphate translocator At5g25400, found in Arabidopsis thaliana (Mouse-ear cress).